A 138-amino-acid polypeptide reads, in one-letter code: Large ribosomal subunit protein uL16 (138 aa).

Belongs to the universal ribosomal protein uL16 family. In terms of assembly, part of the 50S ribosomal subunit.

Its function is as follows. Binds 23S rRNA and is also seen to make contacts with the A and possibly P site tRNAs. The chain is Large ribosomal subunit protein uL16 from Chlamydia caviae (strain ATCC VR-813 / DSM 19441 / 03DC25 / GPIC) (Chlamydophila caviae).